The following is a 151-amino-acid chain: Lipoprotein signal peptidase (151 aa).

Transmembrane regions (helical) follow at residues 61-81 and 88-107; these read GSQW…IWIG and SRWQ…GNGI. Catalysis depends on residues aspartate 117 and aspartate 133. Residues 128 to 148 traverse the membrane as a helical segment; the sequence is VFNLADVAINLAVLCLLIEAI.

Belongs to the peptidase A8 family.

It is found in the cell inner membrane. It catalyses the reaction Release of signal peptides from bacterial membrane prolipoproteins. Hydrolyzes -Xaa-Yaa-Zaa-|-(S,diacylglyceryl)Cys-, in which Xaa is hydrophobic (preferably Leu), and Yaa (Ala or Ser) and Zaa (Gly or Ala) have small, neutral side chains.. The protein operates within protein modification; lipoprotein biosynthesis (signal peptide cleavage). Functionally, this protein specifically catalyzes the removal of signal peptides from prolipoproteins. In Synechococcus sp. (strain RCC307), this protein is Lipoprotein signal peptidase.